We begin with the raw amino-acid sequence, 424 residues long: Glutamyl-tRNA reductase (424 aa).

Residues 53-56 (TCNR), serine 111, 116-118 (EPQ), and glutamine 122 contribute to the substrate site. Cysteine 54 (nucleophile) is an active-site residue. 191–196 (GAGEMI) is an NADP(+) binding site.

Belongs to the glutamyl-tRNA reductase family. As to quaternary structure, homodimer.

It catalyses the reaction (S)-4-amino-5-oxopentanoate + tRNA(Glu) + NADP(+) = L-glutamyl-tRNA(Glu) + NADPH + H(+). It functions in the pathway porphyrin-containing compound metabolism; protoporphyrin-IX biosynthesis; 5-aminolevulinate from L-glutamyl-tRNA(Glu): step 1/2. Its function is as follows. Catalyzes the NADPH-dependent reduction of glutamyl-tRNA(Glu) to glutamate 1-semialdehyde (GSA). The polypeptide is Glutamyl-tRNA reductase (Bordetella bronchiseptica (strain ATCC BAA-588 / NCTC 13252 / RB50) (Alcaligenes bronchisepticus)).